The primary structure comprises 342 residues: Ribosomal RNA small subunit methyltransferase C (342 aa).

Belongs to the methyltransferase superfamily. RsmC family. As to quaternary structure, monomer.

Its subcellular location is the cytoplasm. The catalysed reaction is guanosine(1207) in 16S rRNA + S-adenosyl-L-methionine = N(2)-methylguanosine(1207) in 16S rRNA + S-adenosyl-L-homocysteine + H(+). Functionally, specifically methylates the guanine in position 1207 of 16S rRNA in the 30S particle. The chain is Ribosomal RNA small subunit methyltransferase C from Salmonella heidelberg (strain SL476).